Reading from the N-terminus, the 314-residue chain is Secreted frizzled-related protein 1 (314 aa).

Positions 1 to 31 are cleaved as a signal peptide; sequence MGIGRSEGGRRGAALGVLLALGAALLAVGSA. Residues 53–169 form the FZ domain; sequence TKPPQCVDIP…FPEGDVCIAM (117 aa). Disulfide bonds link C58-C121, C68-C114, C105-C140, C129-C166, and C133-C157. N173 is a glycosylation site (N-linked (GlcNAc...) asparagine). Intrachain disulfides connect C186–C256, C189–C258, and C203–C306. The NTR domain maps to 186 to 306; the sequence is CPPCDNELKS…FMKKMKNHEC (121 aa).

Belongs to the secreted frizzled-related protein (sFRP) family. As to quaternary structure, interacts with WNT1, WNT2 and FRZD6. Interacts with WNT4, WNT8 and MYOC. As to expression, widely expressed. Absent from lung, liver and peripheral blood leukocytes. Highest levels in heart and fetal kidney. Also expressed in testis, ovary, fetal brain and lung, leiomyomal cells, myometrial cells and vascular smooth muscle cells. Expressed in foreskin fibroblasts and in keratinocytes.

The protein resides in the secreted. In terms of biological role, soluble frizzled-related proteins (sFRPS) function as modulators of Wnt signaling through direct interaction with Wnts. They have a role in regulating cell growth and differentiation in specific cell types. SFRP1 decreases intracellular beta-catenin levels. Has antiproliferative effects on vascular cells, in vitro and in vivo, and can induce, in vivo, an angiogenic response. In vascular cell cycle, delays the G1 phase and entry into the S phase. In kidney development, inhibits tubule formation and bud growth in metanephroi. Inhibits WNT1/WNT4-mediated TCF-dependent transcription. This Homo sapiens (Human) protein is Secreted frizzled-related protein 1 (SFRP1).